A 319-amino-acid chain; its full sequence is tRNA-cytidine(32) 2-sulfurtransferase (319 aa).

The PP-loop motif motif lies at serine 43–serine 48. The [4Fe-4S] cluster site is built by cysteine 118, cysteine 121, and cysteine 209. A disordered region spans residues aspartate 272–isoleucine 297. A compositionally biased stretch (basic and acidic residues) spans aspartate 276 to aspartate 286.

This sequence belongs to the TtcA family. In terms of assembly, homodimer. Mg(2+) serves as cofactor. Requires [4Fe-4S] cluster as cofactor.

The protein localises to the cytoplasm. It carries out the reaction cytidine(32) in tRNA + S-sulfanyl-L-cysteinyl-[cysteine desulfurase] + AH2 + ATP = 2-thiocytidine(32) in tRNA + L-cysteinyl-[cysteine desulfurase] + A + AMP + diphosphate + H(+). It functions in the pathway tRNA modification. Catalyzes the ATP-dependent 2-thiolation of cytidine in position 32 of tRNA, to form 2-thiocytidine (s(2)C32). The sulfur atoms are provided by the cysteine/cysteine desulfurase (IscS) system. The sequence is that of tRNA-cytidine(32) 2-sulfurtransferase from Neisseria gonorrhoeae (strain ATCC 700825 / FA 1090).